Here is a 539-residue protein sequence, read N- to C-terminus: Glucans biosynthesis protein D (539 aa).

The segment at residues 1–29 is a signal peptide (tat-type signal); it reads MNRRNLLKASMALAAYGSVSASGLYAARA.

The protein belongs to the OpgD/OpgG family. Predicted to be exported by the Tat system. The position of the signal peptide cleavage has not been experimentally proven.

It localises to the periplasm. It functions in the pathway glycan metabolism; osmoregulated periplasmic glucan (OPG) biosynthesis. Functionally, probably involved in the control of the structural glucose backbone of osmoregulated periplasmic glucans (OPGs). This is Glucans biosynthesis protein D from Pseudomonas savastanoi pv. phaseolicola (strain 1448A / Race 6) (Pseudomonas syringae pv. phaseolicola (strain 1448A / Race 6)).